Here is a 608-residue protein sequence, read N- to C-terminus: MCGIVGIVGNQPVSERLVEALKRLEYRGYDSAGVATIDAGTLQRRRAEGKLVNLESRLREEPLAGTIGIAHTRWATHGAPTERNAHPHFTEGVAVVHNGIIENFAELKDELAAGGAEFQTETDTEVVAHLLAKYRRDGLGRREAMHAMLKRVKGAYALAVLFEDDPSTIMAARNGPPLAIGHGSGEMFLGSDAIALAPFTNEITYLIDGDWAVIGKTGVHIFDFDGNVVERPRQISTAAAFLVDKGNHRHFMEKEIYEQPEVIAHALGHYVNFIENRVVPISDAIDFGKVPSLAISACGTAYLAGLIGKYWFERYARLPVEIDVASEFRYREIPLSPQSAALFISQSGETADTLASLRYCKEHGLKIGAVVNARESTIARESDAVFPILAGPEIGVASTKAFTCQLAVLAALAVGAGKARGTISGEEEQALVKSLAEMPRIMGQVLNSIQPKIESLSRELSKCHDVLYLGRGTSFPLAMEGALKLKEISYIHAEGYAAGELKHGPIALIDENMPVIVIAPHDRFFDKTVSNMQEVAARGGRIILITDEKGAAASKLDTMHTIVLPEVDEIIAPMIFSLPVQLLAYHTAVFMGTDVDQPRNLAKSVTVE.

C2 functions as the Nucleophile; for GATase activity in the catalytic mechanism. A Glutamine amidotransferase type-2 domain is found at 2-217; that stretch reads CGIVGIVGNQ…DGDWAVIGKT (216 aa). SIS domains follow at residues 281-422 and 456-598; these read ISDA…ARGT and LSRE…VDQP. The active-site For Fru-6P isomerization activity is K603.

In terms of assembly, homodimer.

It localises to the cytoplasm. The catalysed reaction is D-fructose 6-phosphate + L-glutamine = D-glucosamine 6-phosphate + L-glutamate. In terms of biological role, catalyzes the first step in hexosamine metabolism, converting fructose-6P into glucosamine-6P using glutamine as a nitrogen source. This Rhizobium meliloti (strain 1021) (Ensifer meliloti) protein is Glutamine--fructose-6-phosphate aminotransferase [isomerizing].